The primary structure comprises 838 residues: Protein P (838 aa).

Positions 1 to 179 are terminal protein domain (TP); that stretch reads MPLSYQHFRK…FCGSPYSWEQ (179 aa). Residues 180-341 are spacer; that stretch reads ELQHSQRHGD…YCLSHLVNLL (162 aa). The interval 218 to 242 is disordered; that stretch reads LGLQPHQGPLATSQPGRSGSIRPRA. The tract at residues 342–685 is polymerase/reverse transcriptase domain (RT); the sequence is EDWGPCVEHG…YLNLYPVARQ (344 aa). The Reverse transcriptase domain occupies 352-595; it reads EHHIRIPRTP…YSLNFMGYVI (244 aa). The Mg(2+) site is built by Asp424, Asp546, and Asp547.

This sequence belongs to the hepadnaviridae P protein family.

The enzyme catalyses DNA(n) + a 2'-deoxyribonucleoside 5'-triphosphate = DNA(n+1) + diphosphate. The catalysed reaction is Endonucleolytic cleavage to 5'-phosphomonoester.. With respect to regulation, activated by host HSP70 and HSP40 in vitro to be able to bind the epsilon loop of the pgRNA. Because deletion of the RNase H region renders the protein partly chaperone-independent, the chaperones may be needed indirectly to relieve occlusion of the RNA-binding site by this domain. Inhibited by several reverse-transcriptase inhibitors: Lamivudine, Adefovir and Entecavir. Functionally, multifunctional enzyme that converts the viral RNA genome into dsDNA in viral cytoplasmic capsids. This enzyme displays a DNA polymerase activity that can copy either DNA or RNA templates, and a ribonuclease H (RNase H) activity that cleaves the RNA strand of RNA-DNA heteroduplexes in a partially processive 3'- to 5'-endonucleasic mode. Neo-synthesized pregenomic RNA (pgRNA) are encapsidated together with the P protein, and reverse-transcribed inside the nucleocapsid. Initiation of reverse-transcription occurs first by binding the epsilon loop on the pgRNA genome, and is initiated by protein priming, thereby the 5'-end of (-)DNA is covalently linked to P protein. Partial (+)DNA is synthesized from the (-)DNA template and generates the relaxed circular DNA (RC-DNA) genome. After budding and infection, the RC-DNA migrates in the nucleus, and is converted into a plasmid-like covalently closed circular DNA (cccDNA). The activity of P protein does not seem to be necessary for cccDNA generation, and is presumably released from (+)DNA by host nuclear DNA repair machinery. The protein is Protein P of Homo sapiens (Human).